The sequence spans 504 residues: Subtilisin-like protease 1 (504 aa).

A signal peptide spans 1–19 (MGVFRFISISLAAVSAANA). Residues 20–116 (AQILSMPHAQ…VEPDTIVSVH (97 aa)) constitute a propeptide that is removed on maturation. Residues 34–116 (SYIVMMKDDT…VEPDTIVSVH (83 aa)) enclose the Inhibitor I9 domain. The Peptidase S8 domain occupies 126-400 (SWGLARISNP…NVLINNGGAK (275 aa)). Active-site charge relay system residues include aspartate 158 and histidine 190. Residues 172 to 198 (AIWGSNQVNDGDDRDGSGHGTHTSGTM) form a disordered region. N-linked (GlcNAc...) asparagine glycans are attached at residues asparagine 233 and asparagine 251. Positions 282 to 294 (NDNQDAQSSSPAS) are enriched in polar residues. The tract at residues 282 to 312 (NDNQDAQSSSPASEPSVCTVGSSAEDDSRSS) is disordered. Serine 345 functions as the Charge relay system in the catalytic mechanism. Over residues 378-394 (TSSITDAGPGTPTNVLI) the composition is skewed to polar residues. Residues 378 to 483 (TSSITDAGPG…YPGGDNFDFD (106 aa)) form a disordered region. Composition is skewed to pro residues over residues 405–449 (NPNP…PGQP) and 457–473 (APAP…PHTP).

The protein belongs to the peptidase S8 family.

The protein resides in the secreted. In terms of biological role, secreted subtilisin-like serine protease with keratinolytic activity that contributes to pathogenicity. This chain is Subtilisin-like protease 1 (SUB1), found in Trichophyton rubrum (Athlete's foot fungus).